Consider the following 198-residue polypeptide: Cell division protein SepF (198 aa).

A disordered region spans residues 170 to 198 (EVPQPPARPARPASTNPPAWGNETNRMAQ). The segment covering 179-188 (ARPASTNPPA) has biased composition (low complexity).

It belongs to the SepF family. As to quaternary structure, homodimer. Interacts with FtsZ.

Its subcellular location is the cytoplasm. Cell division protein that is part of the divisome complex and is recruited early to the Z-ring. Probably stimulates Z-ring formation, perhaps through the cross-linking of FtsZ protofilaments. Its function overlaps with FtsA. The sequence is that of Cell division protein SepF from Nostoc sp. (strain PCC 7120 / SAG 25.82 / UTEX 2576).